A 216-amino-acid polypeptide reads, in one-letter code: 3-isopropylmalate dehydratase small subunit (216 aa).

Belongs to the LeuD family. LeuD type 1 subfamily. In terms of assembly, heterodimer of LeuC and LeuD.

The catalysed reaction is (2R,3S)-3-isopropylmalate = (2S)-2-isopropylmalate. It participates in amino-acid biosynthesis; L-leucine biosynthesis; L-leucine from 3-methyl-2-oxobutanoate: step 2/4. In terms of biological role, catalyzes the isomerization between 2-isopropylmalate and 3-isopropylmalate, via the formation of 2-isopropylmaleate. This Psychrobacter sp. (strain PRwf-1) protein is 3-isopropylmalate dehydratase small subunit.